The primary structure comprises 278 residues: Formamidopyrimidine-DNA glycosylase (278 aa).

Pro2 functions as the Schiff-base intermediate with DNA in the catalytic mechanism. Glu3 serves as the catalytic Proton donor. Residue Lys59 is the Proton donor; for beta-elimination activity of the active site. Residues His94, Arg113, and Lys154 each coordinate DNA. An FPG-type zinc finger spans residues 239 to 273 (KVHTKKGEFCIKCSSKIEKIKFKGRGTYFCPTCQK). Catalysis depends on Arg263, which acts as the Proton donor; for delta-elimination activity.

The protein belongs to the FPG family. In terms of assembly, monomer. Requires Zn(2+) as cofactor.

It catalyses the reaction Hydrolysis of DNA containing ring-opened 7-methylguanine residues, releasing 2,6-diamino-4-hydroxy-5-(N-methyl)formamidopyrimidine.. It carries out the reaction 2'-deoxyribonucleotide-(2'-deoxyribose 5'-phosphate)-2'-deoxyribonucleotide-DNA = a 3'-end 2'-deoxyribonucleotide-(2,3-dehydro-2,3-deoxyribose 5'-phosphate)-DNA + a 5'-end 5'-phospho-2'-deoxyribonucleoside-DNA + H(+). Its function is as follows. Involved in base excision repair of DNA damaged by oxidation or by mutagenic agents. Acts as a DNA glycosylase that recognizes and removes damaged bases. Has a preference for oxidized purines, such as 7,8-dihydro-8-oxoguanine (8-oxoG). Has AP (apurinic/apyrimidinic) lyase activity and introduces nicks in the DNA strand. Cleaves the DNA backbone by beta-delta elimination to generate a single-strand break at the site of the removed base with both 3'- and 5'-phosphates. In Mycoplasmopsis pulmonis (strain UAB CTIP) (Mycoplasma pulmonis), this protein is Formamidopyrimidine-DNA glycosylase (mutM).